The following is a 275-amino-acid chain: DNA repair protein RecO (275 aa).

Residues 1-38 (MTDEADADPQPFAAPPATGAPAADKPARKPRRAAPRTS) form a disordered region. Low complexity predominate over residues 8–24 (DPQPFAAPPATGAPAAD).

The protein belongs to the RecO family.

Its function is as follows. Involved in DNA repair and RecF pathway recombination. In Burkholderia pseudomallei (strain 1710b), this protein is DNA repair protein RecO.